Reading from the N-terminus, the 643-residue chain is uncharacterized protein (643 aa).

Residues 561-643 (LNQELETSSE…GADRKKRGVY (83 aa)) are disordered. Residues 591 to 606 (SRGGRGGRGARGGNRG) show a composition bias toward gly residues. Positions 617 to 635 (GHDRQMKEKHKSDIKQRGA) are enriched in basic and acidic residues.

This is an uncharacterized protein from Caenorhabditis elegans.